Here is a 666-residue protein sequence, read N- to C-terminus: 7SK snRNA methylphosphate capping enzyme (666 aa).

Met1 carries the N-acetylmethionine modification. Residues 1–10 (MIEMAAEKEP) show a composition bias toward basic and acidic residues. Positions 1–141 (MIEMAAEKEP…GSGGSFKHPA (141 aa)) are disordered. A compositionally biased stretch (low complexity) spans 50–61 (GPGPRAHSAGAA). A Phosphoserine modification is found at Ser57. Arg91 is subject to Omega-N-methylarginine. Phosphoserine occurs at positions 126, 150, and 154. A Phosphothreonine modification is found at Thr188. A phosphoserine mark is found at Ser191, Ser192, and Ser229. Residues 235–244 (RKRHRHRGPH) are compositionally biased toward basic residues. Positions 235-291 (RKRHRHRGPHHQQQQQASGGNDSNAAVLPTDPLTPSLHGEGATQQQQNRGQNRDAPQ) are disordered. The segment covering 245 to 254 (HQQQQQASGG) has biased composition (low complexity). Thr268 carries the post-translational modification Phosphothreonine. 2 positions are modified to phosphoserine: Ser307 and Ser321. Residues 309-337 (LPSALQGSSGSLSAPPAASVTSAPSTSSS) are compositionally biased toward low complexity. Residues 309 to 383 (LPSALQGSSG…HHHPLPATGF (75 aa)) form a disordered region. Basic residues predominate over residues 338 to 347 (SRHRKRRRTS). At Ser368 the chain carries Phosphoserine. S-adenosyl-L-methionine-binding positions include Tyr399, Arg410, 428–430 (GCN), 451–452 (DI), 536–537 (NY), and Phe558. A Bin3-type SAM domain is found at 408-663 (DVRLRVLKPE…PVYLFHKARS (256 aa)). Residue Lys620 forms a Glycyl lysine isopeptide (Lys-Gly) (interchain with G-Cter in SUMO2) linkage.

It belongs to the methyltransferase superfamily. Core component of the 7SK RNP complex, at least composed of 7SK RNA, LARP7, MEPCE, HEXIM1 (or HEXIM2) and P-TEFb (composed of CDK9 and CCNT1/cyclin-T1). Interacts with METTL16. Interacts with RBM7; upon genotoxic stress this interaction is enhanced, triggering the release of inactive P-TEFb complex from the core, yielding to P-TEFb complex activation. Post-translationally, dephosphorylated at Ser-126 by the PNUTS-PP1 complex, promoting RNA polymerase II transcription pause-release.

It localises to the nucleus. The catalysed reaction is a 5'-end triphospho-guanosine-ribonucleotide-snRNA + S-adenosyl-L-methionine = a 5'-end methyltriphosphate-guanosine-ribonucleotide-snRNA + S-adenosyl-L-homocysteine. S-adenosyl-L-methionine-dependent methyltransferase that adds a methylphosphate cap at the 5'-end of 7SK snRNA (7SK RNA), leading to stabilize it. Also has a non-enzymatic function as part of the 7SK RNP complex: the 7SK RNP complex sequesters the positive transcription elongation factor b (P-TEFb) in a large inactive 7SK RNP complex preventing RNA polymerase II phosphorylation and subsequent transcriptional elongation. The 7SK RNP complex also promotes snRNA gene transcription by RNA polymerase II via interaction with the little elongation complex (LEC). In the 7SK RNP complex, MEPCE is required to stabilize 7SK RNA and facilitate the assembly of 7SK RNP complex. MEPCE has a non-enzymatic function in the 7SK RNP complex; it has a non-enzymatic function; interaction with LARP7 within the 7SK RNP complex occluding its catalytic center. Also required for stability of U6 snRNAs. In Mus musculus (Mouse), this protein is 7SK snRNA methylphosphate capping enzyme.